The following is a 524-amino-acid chain: Bifunctional purine biosynthesis protein PurH (524 aa).

Positions 1–144 constitute an MGS-like domain; sequence MTRRALVSVS…KNSAHVGVVV (144 aa).

Belongs to the PurH family.

It catalyses the reaction (6R)-10-formyltetrahydrofolate + 5-amino-1-(5-phospho-beta-D-ribosyl)imidazole-4-carboxamide = 5-formamido-1-(5-phospho-D-ribosyl)imidazole-4-carboxamide + (6S)-5,6,7,8-tetrahydrofolate. The catalysed reaction is IMP + H2O = 5-formamido-1-(5-phospho-D-ribosyl)imidazole-4-carboxamide. The protein operates within purine metabolism; IMP biosynthesis via de novo pathway; 5-formamido-1-(5-phospho-D-ribosyl)imidazole-4-carboxamide from 5-amino-1-(5-phospho-D-ribosyl)imidazole-4-carboxamide (10-formyl THF route): step 1/1. Its pathway is purine metabolism; IMP biosynthesis via de novo pathway; IMP from 5-formamido-1-(5-phospho-D-ribosyl)imidazole-4-carboxamide: step 1/1. The polypeptide is Bifunctional purine biosynthesis protein PurH (Anaeromyxobacter dehalogenans (strain 2CP-1 / ATCC BAA-258)).